Consider the following 148-residue polypeptide: Sec-independent protein translocase protein TatB (148 aa).

The helical transmembrane segment at 2 to 22 threads the bilayer; sequence FNDIGPLELVTLVVLAVLVFG. 2 stretches are compositionally biased toward basic and acidic residues: residues 100 to 110 and 128 to 148; these read VTDAVHGRESE and MTKKREQLEADERPPFDADAT. A disordered region spans residues 100–148; sequence VTDAVHGRESETSASSSSANGSAGGTVDMTKKREQLEADERPPFDADAT.

The protein belongs to the TatB family. In terms of assembly, the Tat system comprises two distinct complexes: a TatABC complex, containing multiple copies of TatA, TatB and TatC subunits, and a separate TatA complex, containing only TatA subunits. Substrates initially bind to the TatABC complex, which probably triggers association of the separate TatA complex to form the active translocon.

Its subcellular location is the cell membrane. Its function is as follows. Part of the twin-arginine translocation (Tat) system that transports large folded proteins containing a characteristic twin-arginine motif in their signal peptide across membranes. Together with TatC, TatB is part of a receptor directly interacting with Tat signal peptides. TatB may form an oligomeric binding site that transiently accommodates folded Tat precursor proteins before their translocation. This is Sec-independent protein translocase protein TatB from Streptomyces avermitilis (strain ATCC 31267 / DSM 46492 / JCM 5070 / NBRC 14893 / NCIMB 12804 / NRRL 8165 / MA-4680).